We begin with the raw amino-acid sequence, 140 residues long: Putative pre-16S rRNA nuclease (140 aa).

The protein belongs to the YqgF nuclease family.

It localises to the cytoplasm. In terms of biological role, could be a nuclease involved in processing of the 5'-end of pre-16S rRNA. In Endomicrobium trichonymphae, this protein is Putative pre-16S rRNA nuclease.